Consider the following 89-residue polypeptide: Small ribosomal subunit protein uS15 (89 aa).

The protein belongs to the universal ribosomal protein uS15 family. In terms of assembly, part of the 30S ribosomal subunit. Forms a bridge to the 50S subunit in the 70S ribosome, contacting the 23S rRNA.

One of the primary rRNA binding proteins, it binds directly to 16S rRNA where it helps nucleate assembly of the platform of the 30S subunit by binding and bridging several RNA helices of the 16S rRNA. In terms of biological role, forms an intersubunit bridge (bridge B4) with the 23S rRNA of the 50S subunit in the ribosome. The polypeptide is Small ribosomal subunit protein uS15 (Nitratidesulfovibrio vulgaris (strain DP4) (Desulfovibrio vulgaris)).